Reading from the N-terminus, the 237-residue chain is B3 domain-containing protein Os03g0184500 (237 aa).

The TF-B3 DNA-binding region spans 137–228; sequence FVKPMLHSHV…TFKVHIIRAT (92 aa).

It is found in the nucleus. In Oryza sativa subsp. japonica (Rice), this protein is B3 domain-containing protein Os03g0184500.